The chain runs to 159 residues: bZIP transcription factor 11 (159 aa).

A compositionally biased stretch (low complexity) spans 1–21; the sequence is MESSSSGTTSSTIQTSSGSEE. The interval 1 to 47 is disordered; it reads MESSSSGTTSSTIQTSSGSEESLMEQRKRKRMLSNRESARRSRMKKQ. Residues 25 to 88 enclose the bZIP domain; that stretch reads EQRKRKRMLS…LTVEAENSVL (64 aa). The tract at residues 27-48 is basic motif; the sequence is RKRKRMLSNRESARRSRMKKQK. The segment at 53–67 is leucine-zipper; it reads LTAQVNHLKKENTEI.

Forms heterodimers with BZIP1, BZIP9, BZIP10, BZIP25 and BZIP63. Interacts with ADA2B. Highly expressed in stems and flowers. Expressed in root tips, cotyledons, leaf vasculature, embryos, apical parts of siliques and funiculi.

The protein localises to the nucleus. Transcription factor that binds to the DNA sequence 5'-ACTCAT-3' in target gene promoters. Promotes POX1/PRODH1 expression in response to hypoosmolarity stress. Positively regulates the expression of ASN1 and POX2/PRODH2 genes, which are involved in amino acid metabolism. Regulates several metabolic pathways such as myo-inositol, raffinose and trehalose. Regulates several trehalose metabolism genes, including TRE1, TPP5 and TPP6. Mediates recruitment of the histone acetylation machinery to activate auxin-induced transcription. Interacts with ADA2B adapter protein to promote ADA2B-mediated recruitment of SAGA-like histone acetyltransferase complexes to specific auxin-responsive genes. The chain is bZIP transcription factor 11 from Arabidopsis thaliana (Mouse-ear cress).